An 879-amino-acid polypeptide reads, in one-letter code: Valine--tRNA ligase (879 aa).

Residues 43–53 (PNVTGVLHMGH) carry the 'HIGH' region motif. The 'KMSKS' region motif lies at 534–538 (KMSKS). Residue Lys-537 participates in ATP binding. Positions 807–878 (LGNMIDVEAE…LKESIAALKK (72 aa)) form a coiled coil.

This sequence belongs to the class-I aminoacyl-tRNA synthetase family. ValS type 1 subfamily. In terms of assembly, monomer.

It localises to the cytoplasm. It carries out the reaction tRNA(Val) + L-valine + ATP = L-valyl-tRNA(Val) + AMP + diphosphate. Its function is as follows. Catalyzes the attachment of valine to tRNA(Val). As ValRS can inadvertently accommodate and process structurally similar amino acids such as threonine, to avoid such errors, it has a 'posttransfer' editing activity that hydrolyzes mischarged Thr-tRNA(Val) in a tRNA-dependent manner. This is Valine--tRNA ligase from Bacteroides thetaiotaomicron (strain ATCC 29148 / DSM 2079 / JCM 5827 / CCUG 10774 / NCTC 10582 / VPI-5482 / E50).